The chain runs to 194 residues: Isopentenyl-diphosphate Delta-isomerase (194 aa).

The Mn(2+) site is built by His-23 and His-30. The Nudix hydrolase domain occupies 28–162 (PLHLAFSCYV…TTDISPWCRQ (135 aa)). Cys-65 is a catalytic residue. Residue His-67 participates in Mn(2+) binding. Glu-85 is a binding site for Mg(2+). 2 residues coordinate Mn(2+): Glu-112 and Glu-114. Glu-114 is an active-site residue.

This sequence belongs to the IPP isomerase type 1 family. The cofactor is Mg(2+). It depends on Mn(2+) as a cofactor.

Its subcellular location is the cytoplasm. It carries out the reaction isopentenyl diphosphate = dimethylallyl diphosphate. It participates in isoprenoid biosynthesis; dimethylallyl diphosphate biosynthesis; dimethylallyl diphosphate from isopentenyl diphosphate: step 1/1. In terms of biological role, catalyzes the 1,3-allylic rearrangement of the homoallylic substrate isopentenyl (IPP) to its highly electrophilic allylic isomer, dimethylallyl diphosphate (DMAPP). This Saccharopolyspora erythraea (strain ATCC 11635 / DSM 40517 / JCM 4748 / NBRC 13426 / NCIMB 8594 / NRRL 2338) protein is Isopentenyl-diphosphate Delta-isomerase.